A 124-amino-acid polypeptide reads, in one-letter code: Large ribosomal subunit protein bL12 (124 aa).

The protein belongs to the bacterial ribosomal protein bL12 family. Homodimer. Part of the ribosomal stalk of the 50S ribosomal subunit. Forms a multimeric L10(L12)X complex, where L10 forms an elongated spine to which 2 to 4 L12 dimers bind in a sequential fashion. Binds GTP-bound translation factors.

In terms of biological role, forms part of the ribosomal stalk which helps the ribosome interact with GTP-bound translation factors. Is thus essential for accurate translation. The sequence is that of Large ribosomal subunit protein bL12 from Idiomarina loihiensis (strain ATCC BAA-735 / DSM 15497 / L2-TR).